We begin with the raw amino-acid sequence, 160 residues long: uncharacterized protein (160 aa).

Positions Leu9–Glu151 constitute an N-acetyltransferase domain.

This is an uncharacterized protein from Oceanobacillus iheyensis (strain DSM 14371 / CIP 107618 / JCM 11309 / KCTC 3954 / HTE831).